We begin with the raw amino-acid sequence, 108 residues long: Peptidyl-prolyl cis-trans isomerase Fkbp12 (108 aa).

Residues 1–21 (MGVQVVPIAPGDGSTYPKNGQ) form a disordered region. In terms of domain architecture, PPIase FKBP-type spans 20–108 (GQKVTVHYTG…TFDVELLKVE (89 aa)).

This sequence belongs to the FKBP-type PPIase family. FKBP1 subfamily.

It localises to the cytoplasm. The enzyme catalyses [protein]-peptidylproline (omega=180) = [protein]-peptidylproline (omega=0). PPIases accelerate the folding of proteins. It catalyzes the cis-trans isomerization of proline imidic peptide bonds in oligopeptides. Binds to ligand-free TGF beta type I receptor, from which it is released upon a ligand-induced, type II receptor mediated phosphorylation of the type I receptor. Binding is inhibitory to the signaling pathways of the TGF beta family ligands. The protein is Peptidyl-prolyl cis-trans isomerase Fkbp12 of Drosophila melanogaster (Fruit fly).